The following is a 519-amino-acid chain: Galactose-1-phosphate uridylyltransferase (519 aa).

The protein belongs to the galactose-1-phosphate uridylyltransferase type 2 family.

The protein localises to the cytoplasm. The catalysed reaction is alpha-D-galactose 1-phosphate + UDP-alpha-D-glucose = alpha-D-glucose 1-phosphate + UDP-alpha-D-galactose. It participates in carbohydrate metabolism; galactose metabolism. In Caldanaerobacter subterraneus subsp. tengcongensis (strain DSM 15242 / JCM 11007 / NBRC 100824 / MB4) (Thermoanaerobacter tengcongensis), this protein is Galactose-1-phosphate uridylyltransferase.